The following is a 954-amino-acid chain: Isoleucine--tRNA ligase (954 aa).

A 'HIGH' region motif is present at residues 60–70 (PYANGALHMGH). Residue Glu-564 participates in L-isoleucyl-5'-AMP binding. The short motif at 605-609 (KMSKS) is the 'KMSKS' region element. Lys-608 is an ATP binding site. Zn(2+)-binding residues include Cys-923, Cys-926, Cys-943, and Cys-946.

The protein belongs to the class-I aminoacyl-tRNA synthetase family. IleS type 1 subfamily. As to quaternary structure, monomer. It depends on Zn(2+) as a cofactor.

It localises to the cytoplasm. The enzyme catalyses tRNA(Ile) + L-isoleucine + ATP = L-isoleucyl-tRNA(Ile) + AMP + diphosphate. In terms of biological role, catalyzes the attachment of isoleucine to tRNA(Ile). As IleRS can inadvertently accommodate and process structurally similar amino acids such as valine, to avoid such errors it has two additional distinct tRNA(Ile)-dependent editing activities. One activity is designated as 'pretransfer' editing and involves the hydrolysis of activated Val-AMP. The other activity is designated 'posttransfer' editing and involves deacylation of mischarged Val-tRNA(Ile). This Synechococcus sp. (strain ATCC 27144 / PCC 6301 / SAUG 1402/1) (Anacystis nidulans) protein is Isoleucine--tRNA ligase.